The sequence spans 360 residues: D-alanine--D-alanine ligase (360 aa).

The ATP-grasp domain maps to 149–353 (KKLMAAEGLP…YEELLDVLVQ (205 aa)). 176 to 231 (KNLLGLPVFVKPARGGSSIGISRVTAWEDFNKAVGLARAHDEKVIVESEIVGSEVE) contacts ATP. Mg(2+)-binding residues include D308, E320, and N322.

This sequence belongs to the D-alanine--D-alanine ligase family. Mg(2+) is required as a cofactor. Requires Mn(2+) as cofactor.

The protein localises to the cytoplasm. It carries out the reaction 2 D-alanine + ATP = D-alanyl-D-alanine + ADP + phosphate + H(+). Its pathway is cell wall biogenesis; peptidoglycan biosynthesis. Its function is as follows. Cell wall formation. In Corynebacterium glutamicum (strain ATCC 13032 / DSM 20300 / JCM 1318 / BCRC 11384 / CCUG 27702 / LMG 3730 / NBRC 12168 / NCIMB 10025 / NRRL B-2784 / 534), this protein is D-alanine--D-alanine ligase.